The chain runs to 182 residues: Adenylate kinase (182 aa).

12 to 17 contacts ATP; that stretch reads GAGKGT. The NMP stretch occupies residues 32–61; the sequence is STGDLLRDEVSSGSVLGIKAAEIMNKGELV. AMP contacts are provided by residues Thr33, Arg38, 59-61, 85-88, and Gln92; these read ELV and GFPR. The segment at 126–132 is LID; it reads ERGRQDD. Arg127 serves as a coordination point for ATP. The AMP site is built by Arg129 and Arg140. Ala168 contributes to the ATP binding site.

This sequence belongs to the adenylate kinase family. Monomer.

Its subcellular location is the cytoplasm. It carries out the reaction AMP + ATP = 2 ADP. The protein operates within purine metabolism; AMP biosynthesis via salvage pathway; AMP from ADP: step 1/1. In terms of biological role, catalyzes the reversible transfer of the terminal phosphate group between ATP and AMP. Plays an important role in cellular energy homeostasis and in adenine nucleotide metabolism. This Prochlorococcus marinus (strain NATL1A) protein is Adenylate kinase.